The chain runs to 530 residues: Glucose-6-phosphate isomerase (530 aa).

Glu-322 functions as the Proton donor in the catalytic mechanism. Residues His-351 and Lys-455 contribute to the active site.

Belongs to the GPI family.

It localises to the cytoplasm. It carries out the reaction alpha-D-glucose 6-phosphate = beta-D-fructose 6-phosphate. Its pathway is carbohydrate biosynthesis; gluconeogenesis. The protein operates within carbohydrate degradation; glycolysis; D-glyceraldehyde 3-phosphate and glycerone phosphate from D-glucose: step 2/4. Catalyzes the reversible isomerization of glucose-6-phosphate to fructose-6-phosphate. This chain is Glucose-6-phosphate isomerase, found in Geobacter sp. (strain M21).